Consider the following 203-residue polypeptide: Urease accessory protein UreG (203 aa).

11–18 contacts GTP; sequence GPVGSGKT.

This sequence belongs to the SIMIBI class G3E GTPase family. UreG subfamily. As to quaternary structure, homodimer. UreD, UreF and UreG form a complex that acts as a GTP-hydrolysis-dependent molecular chaperone, activating the urease apoprotein by helping to assemble the nickel containing metallocenter of UreC. The UreE protein probably delivers the nickel.

It is found in the cytoplasm. In terms of biological role, facilitates the functional incorporation of the urease nickel metallocenter. This process requires GTP hydrolysis, probably effectuated by UreG. This chain is Urease accessory protein UreG, found in Prochlorococcus marinus (strain MIT 9215).